We begin with the raw amino-acid sequence, 278 residues long: MAIRKYKPTTPGRRGSSVADFSEITRSTPEKSLIRPLHGTGGRNAHGRITTRHKGGGHKRAYRLIDFRRHDKDGVNAKVAHIEYDPNRTARIALLHFLDGEKRYIIAPVGLSQGDVVESGANADIKPGNNLPLRNIPTGTTVHAVELRPGGGAKLARSAGSGIQLLGKEGAYASLRMPSGEIRRVDVRCRATVGEVGNAEQANINWGKAGRMRWKGKRPTVRGVVMNPVDHPHGGGEGKTSGGRHPVSPWGKPEGRTRKPNKASDKLIVRRRRTGKKR.

2 disordered regions span residues leucine 33 to glycine 57 and valine 224 to arginine 278. Positions alanine 45–glycine 57 are enriched in basic residues. Residues proline 253–isoleucine 268 are compositionally biased toward basic and acidic residues. A compositionally biased stretch (basic residues) spans valine 269 to arginine 278.

It belongs to the universal ribosomal protein uL2 family. As to quaternary structure, part of the 50S ribosomal subunit. Forms a bridge to the 30S subunit in the 70S ribosome.

One of the primary rRNA binding proteins. Required for association of the 30S and 50S subunits to form the 70S ribosome, for tRNA binding and peptide bond formation. It has been suggested to have peptidyltransferase activity; this is somewhat controversial. Makes several contacts with the 16S rRNA in the 70S ribosome. In Mycobacteroides abscessus (strain ATCC 19977 / DSM 44196 / CCUG 20993 / CIP 104536 / JCM 13569 / NCTC 13031 / TMC 1543 / L948) (Mycobacterium abscessus), this protein is Large ribosomal subunit protein uL2.